Consider the following 134-residue polypeptide: MSEKIEGIIDDLLNLEENAHGIAIIGKDGKIITQTENWNISNDLDKLNEFLNEKLALGKKGITSLSIQGIKYMIVENTEERKIGTNITGKGHVVICPIPIGGTGALITYVNPRAGPRDVLFNVQEYAKKLTDLI.

The interval 55-62 is loki loop; the sequence is LALGKKGI.

It belongs to the Asgard profilin family.

It localises to the cytoplasm. The protein localises to the cytoskeleton. With respect to regulation, inhibition of rabbit actin polymerization is reduced by phosphatidylinositol-(4,5)-P2(1,2-dipalmitoyl), a soluble form of the phospholipid phosphatidylinositol, suggesting an unknown lipid might regulate actin-profilin interaction in vivo. Binds to actin and affects the structure of the cytoskeleton. At high concentrations inhibits spontaneous rabbit actin nucleation. This strongly suggests this archaea has a profilin-regulated actin system, and actin-type genes can be identified in this organism. This Lokiarchaeum sp. (strain GC14_75) protein is Loki profilin-1.